Reading from the N-terminus, the 346-residue chain is D-fructose 1,6-bisphosphatase class 2/sedoheptulose 1,7-bisphosphatase (346 aa).

Aspartate 33, glutamate 57, aspartate 97, and glutamate 100 together coordinate Mn(2+). Substrate-binding positions include 100–102 (EGT), tyrosine 131, 176–178 (RDR), and 198–200 (DGD). Glutamate 225 contributes to the Mn(2+) binding site.

This sequence belongs to the FBPase class 2 family. As to quaternary structure, homotetramer. The cofactor is Mn(2+).

The catalysed reaction is beta-D-fructose 1,6-bisphosphate + H2O = beta-D-fructose 6-phosphate + phosphate. The enzyme catalyses D-sedoheptulose 1,7-bisphosphate + H2O = D-sedoheptulose 7-phosphate + phosphate. Its pathway is carbohydrate biosynthesis; Calvin cycle. In terms of biological role, catalyzes the hydrolysis of fructose 1,6-bisphosphate (Fru 1,6-P2) and sedoheptulose 1,7-bisphosphate (Sed 1,7-P2) to fructose 6-phosphate and sedoheptulose 7-phosphate, respectively. The polypeptide is D-fructose 1,6-bisphosphatase class 2/sedoheptulose 1,7-bisphosphatase (Gloeobacter violaceus (strain ATCC 29082 / PCC 7421)).